We begin with the raw amino-acid sequence, 347 residues long: Ribosomal RNA large subunit methyltransferase M (347 aa).

S-adenosyl-L-methionine contacts are provided by residues serine 184, 217-220, aspartate 236, aspartate 256, and aspartate 272; that span reads APGG. Lysine 301 acts as the Proton acceptor in catalysis.

This sequence belongs to the class I-like SAM-binding methyltransferase superfamily. RNA methyltransferase RlmE family. RlmM subfamily. Monomer.

It localises to the cytoplasm. It catalyses the reaction cytidine(2498) in 23S rRNA + S-adenosyl-L-methionine = 2'-O-methylcytidine(2498) in 23S rRNA + S-adenosyl-L-homocysteine + H(+). Functionally, catalyzes the 2'-O-methylation at nucleotide C2498 in 23S rRNA. This Xanthomonas euvesicatoria pv. vesicatoria (strain 85-10) (Xanthomonas campestris pv. vesicatoria) protein is Ribosomal RNA large subunit methyltransferase M.